Reading from the N-terminus, the 121-residue chain is Large ribosomal subunit protein uL22 (121 aa).

The protein belongs to the universal ribosomal protein uL22 family. Part of the 50S ribosomal subunit.

In terms of biological role, this protein binds specifically to 23S rRNA; its binding is stimulated by other ribosomal proteins, e.g. L4, L17, and L20. It is important during the early stages of 50S assembly. It makes multiple contacts with different domains of the 23S rRNA in the assembled 50S subunit and ribosome. The globular domain of the protein is located near the polypeptide exit tunnel on the outside of the subunit, while an extended beta-hairpin is found that lines the wall of the exit tunnel in the center of the 70S ribosome. The chain is Large ribosomal subunit protein uL22 from Synechocystis sp. (strain ATCC 27184 / PCC 6803 / Kazusa).